Consider the following 176-residue polypeptide: MDFKQYSPEELKECSMIEVVHSVLGDKRQATTFNELVQEIAQVLGLSQEQVNAKIAQFYTDLNIDGRFINLGENRWGLRSWYPYEQIDEEILPQPKPKKKRKVEDDGFDDYIEEDEDFDDADVTEDEDDDVEDLDKVLEDEDGDDDDLDDLDEDEDDFAEEELEYDETEEEEEEEL.

One can recognise an HTH HARE-type domain in the interval 14-81 (CSMIEVVHSV…GENRWGLRSW (68 aa)). Residues 91-176 (ILPQPKPKKK…ETEEEEEEEL (86 aa)) form a disordered region. The span at 106–176 (DGFDDYIEED…ETEEEEEEEL (71 aa)) shows a compositional bias: acidic residues.

It belongs to the RpoE family. RNAP is composed of a core of 2 alpha, a beta and a beta' subunits. The core is associated with a delta subunit and one of several sigma factors.

In terms of biological role, participates in both the initiation and recycling phases of transcription. In the presence of the delta subunit, RNAP displays an increased specificity of transcription, a decreased affinity for nucleic acids, and an increased efficiency of RNA synthesis because of enhanced recycling. This is Probable DNA-directed RNA polymerase subunit delta from Bacillus thuringiensis (strain Al Hakam).